We begin with the raw amino-acid sequence, 22 residues long: Thylakoid lumenal 11 kDa protein (22 aa).

Residues 1–22 (FKGGGPYGQGVTRGQDLSGKDF) are disordered.

This sequence to A.thaliana At2g44920.

The protein localises to the plastid. It is found in the chloroplast thylakoid lumen. The protein is Thylakoid lumenal 11 kDa protein of Spinacia oleracea (Spinach).